A 338-amino-acid polypeptide reads, in one-letter code: Phenylalanine--tRNA ligase alpha subunit (338 aa).

Position 252 (Glu-252) interacts with Mg(2+).

Belongs to the class-II aminoacyl-tRNA synthetase family. Phe-tRNA synthetase alpha subunit type 1 subfamily. In terms of assembly, tetramer of two alpha and two beta subunits. The cofactor is Mg(2+).

It localises to the cytoplasm. It carries out the reaction tRNA(Phe) + L-phenylalanine + ATP = L-phenylalanyl-tRNA(Phe) + AMP + diphosphate + H(+). This Pseudomonas putida (strain ATCC 700007 / DSM 6899 / JCM 31910 / BCRC 17059 / LMG 24140 / F1) protein is Phenylalanine--tRNA ligase alpha subunit.